Consider the following 164-residue polypeptide: S-ribosylhomocysteine lyase (164 aa).

Fe cation-binding residues include H54, H58, and C128.

The protein belongs to the LuxS family. In terms of assembly, homodimer. Fe cation serves as cofactor.

It carries out the reaction S-(5-deoxy-D-ribos-5-yl)-L-homocysteine = (S)-4,5-dihydroxypentane-2,3-dione + L-homocysteine. Its function is as follows. Involved in the synthesis of autoinducer 2 (AI-2) which is secreted by bacteria and is used to communicate both the cell density and the metabolic potential of the environment. The regulation of gene expression in response to changes in cell density is called quorum sensing. Catalyzes the transformation of S-ribosylhomocysteine (RHC) to homocysteine (HC) and 4,5-dihydroxy-2,3-pentadione (DPD). This Campylobacter jejuni subsp. jejuni serotype O:6 (strain 81116 / NCTC 11828) protein is S-ribosylhomocysteine lyase.